The chain runs to 549 residues: Frizzled-7-A (549 aa).

Positions 1-22 (MSSTVSLLFCCLFLQLCPSAQQ) are cleaved as a signal peptide. At 23 to 231 (YHGEKGISVP…EEEVRFARLW (209 aa)) the chain is on the extracellular side. Residues 32–151 (PDHGFCQPIS…HGAGEICVGQ (120 aa)) enclose the FZ domain. 5 disulfides stabilise this stretch: Cys37–Cys98, Cys45–Cys91, Cys82–Cys119, Cys108–Cys148, and Cys112–Cys136. Asn51 is a glycosylation site (N-linked (GlcNAc...) asparagine). Asn152 carries an N-linked (GlcNAc...) asparagine glycan. Residues 232–252 (VGIWAILCCISTLFTVLTYLV) form a helical membrane-spanning segment. Residues 253–263 (DMRRFSYPERP) are Cytoplasmic-facing. Residues 264–284 (IIFLSGCYFMVAVAYTAGFLL) form a helical membrane-spanning segment. At 285-311 (EERAVCVERFSEDSYRTVAQGTKKEGC) the chain is on the extracellular side. The chain crosses the membrane as a helical span at residues 312–332 (TILFMILYFFGMASSIWWVIL). Residues 333–354 (SLTWFLSAGMKWGHEAIEANSQ) are Cytoplasmic-facing. The helical transmembrane segment at 355-375 (YFHLAAWAVPAVKTITILAMG) threads the bilayer. The Extracellular portion of the chain corresponds to 376-398 (QVDGDVLSGVCYVGINSVDSLRG). The helical transmembrane segment at 399-419 (FVLAPLFVYLFIGTSFLLAGF) threads the bilayer. Residues 420–445 (VSLFRIRTIMKHDGTKTEKLEKLMVR) lie on the Cytoplasmic side of the membrane. A helical membrane pass occupies residues 446–466 (IGVFSVMYTVPATIVLACYFY). The Extracellular portion of the chain corresponds to 467–503 (EQAFRDTWEKTWLVQTCKGYAVPCPNYNFAPMSPDFT). A helical transmembrane segment spans residues 504–524 (VFMIKYLMTMIVGITSSFWIW). Residues 525–549 (SGKTLQSWRRFYHRLSNGSKGETAV) lie on the Cytoplasmic side of the membrane. Positions 527-532 (KTLQSW) match the Lys-Thr-X-X-X-Trp motif, mediates interaction with the PDZ domain of Dvl family members motif. The PDZ-binding signature appears at 547–549 (TAV).

It belongs to the G-protein coupled receptor Fz/Smo family. As to quaternary structure, interacts with wnt11 and sdc4. The extracellular domain interacts with the extracellular domain of pcdh8/papc. In terms of tissue distribution, expressed in the animal region of cleavage stage embryos. During gastrulation, broadly expressed on the dorsal side of the embryo in deep mesodermal cells surrounding the blastopore lip and in presumptive anterior neuroectoderm. During neurulation, becomes progressively more restricted to the dorsal epidermis, neural plate, and neural tube. Expressed in the cranial neural crest of neurulae and tailbud embryos as well as the pronephros of tailbud embryos. Localized to the brain of neurulae, tailbud embryos and tadpoles. In tadpoles, strongly expressed in the eye and developing heart.

The protein resides in the cell membrane. It is found in the endosome membrane. Receptor for Wnt proteins. Acts in both canonical and non-canonical Wnt pathways. Although different papers report differing Wnt preferences, wnt5a, wnt8b and wnt11 have been proposed as synergists. In the canonical Wnt pathway, acts via beta-catenin to promote the expression of the dorsal genes siamois, twin and nodal3 and to establish the dorsal axis of the embryo and induce dorsal mesoderm formation. In a non-canonical Wnt/planar cell polarity (PCP) pathway, acts with sdc4 and dvl2/dsh to regulate convergent extension cell movements during gastrulation. Triggers phosphorylation of dvl2/dsh and its translocation to the plasma membrane. In a third branch of Wnt signaling, acts in a non-canonical pathway via trimeric G proteins, and independently of dvl2/dsh, to recruit protein kinase C (PKC) to the membrane and thus activate PKC. PKC signaling controls cell sorting and tissue separation during gastrulation. The protein is Frizzled-7-A (fzd7-a) of Xenopus laevis (African clawed frog).